The chain runs to 693 residues: Polyribonucleotide nucleotidyltransferase (693 aa).

Mg(2+)-binding residues include Asp489 and Asp495. A KH domain is found at 556–615 (PQIHVMNINPAKIKDVVGRGGATVKGIVEKTGAQIDTSDSGEVKVFAKDKKSMDMAVAMI). The 69-residue stretch at 625-693 (GQVYKGKIVK…GRVKLSLVAR (69 aa)) folds into the S1 motif domain.

This sequence belongs to the polyribonucleotide nucleotidyltransferase family. As to quaternary structure, component of the RNA degradosome, which is a multiprotein complex involved in RNA processing and mRNA degradation. Requires Mg(2+) as cofactor.

The protein resides in the cytoplasm. The enzyme catalyses RNA(n+1) + phosphate = RNA(n) + a ribonucleoside 5'-diphosphate. In terms of biological role, involved in mRNA degradation. Catalyzes the phosphorolysis of single-stranded polyribonucleotides processively in the 3'- to 5'-direction. This chain is Polyribonucleotide nucleotidyltransferase, found in Francisella tularensis subsp. tularensis (strain WY96-3418).